The following is a 1477-amino-acid chain: Oligomycin resistance ATP-dependent permease YOR1 (1477 aa).

The segment at 1-48 (MTITVGDAVSETELENKSQNVVLSPKASASSDISTDVDKDTSSSWDDK) is disordered. The Cytoplasmic portion of the chain corresponds to 1–206 (MTITVGDAVS…RALLFTFKKQ (206 aa)). Phosphoserine occurs at positions 10 and 24. The span at 36 to 48 (DVDKDTSSSWDDK) shows a compositional bias: basic and acidic residues. Thr53 is modified (phosphothreonine). Positions 71 to 73 (DIE) match the Diacidic ER export motif DxE motif. Residues 207 to 227 (YFMSIVFAILANCTSGFNPMI) form a helical membrane-spanning segment. The region spanning 207-493 (YFMSIVFAIL…LPIAIGTGID (287 aa)) is the ABC transmembrane type-1 1 domain. Topologically, residues 228–249 (TKRLIEFVEEKAIFHSMHVNKG) are extracellular. The helical transmembrane segment at 250–270 (IGYAIGACLMMFVNGLTFNHF) threads the bilayer. Residues 271-328 (FHTSQLTGVQAKSILTKAAMKKMFNASNYARHCFPNGKVTSFVTTDLARIEFALSFQP) lie on the Cytoplasmic side of the membrane. The chain crosses the membrane as a helical span at residues 329–349 (FLAGFPAILAICIVLLIVNLG). The Extracellular segment spans residues 350-357 (PIALVGIG). The helical transmembrane segment at 358–370 (IFFGGFFISLFAF) threads the bilayer. At 371–433 (KLILGFRIAA…KVRKMQLSRN (63 aa)) the chain is on the cytoplasmic side. The chain crosses the membrane as a helical span at residues 434 to 454 (FLIAMAMSLPSIASLVTFLAM). The Extracellular portion of the chain corresponds to 455 to 478 (YKVNKGGRQPGNIFASLSLFQVLS). Residues 479–499 (LQMFFLPIAIGTGIDMIIGLG) form a helical membrane-spanning segment. Residues 500–615 (RLQSLLEAPE…DLNFDIKKGE (116 aa)) lie on the Cytoplasmic side of the membrane. Residues 552 to 595 (KGEAKDEGKKNKKKRKDTWGKPSASTNKAKRLDNMLKDRDGPED) are disordered. The segment covering 581–595 (KRLDNMLKDRDGPED) has biased composition (basic and acidic residues). Residues 581-808 (KRLDNMLKDR…NQTLINLLQF (228 aa)) form the ABC transporter 1 domain. The helical transmembrane segment at 616-636 (FIMITGPIGTGKSSLLNAMAG) threads the bilayer. ATP is bound at residue 621–628 (GPIGTGKS). Over 637-892 (SMRKTDGKVE…EYIKAAVGKW (256 aa)) the chain is Extracellular. 3 N-linked (GlcNAc...) asparagine glycosylation sites follow: Asn661, Asn759, and Asn799. A helical transmembrane segment spans residues 893-913 (GFIALPLYAILVVGTTFCSLF). Residues 897 to 1175 (LPLYAILVVG…ILRAMTQTEN (279 aa)) enclose the ABC transmembrane type-1 2 domain. At 914–940 (SSVWLSYWTENKFKNRPPSFYMGLYSF) the chain is on the cytoplasmic side. A helical transmembrane segment spans residues 941-961 (FVFAAFIFMNGQFTILCAMGI). The Extracellular portion of the chain corresponds to 962 to 1027 (MASKWLNLRA…ANIVGVCVMC (66 aa)). A helical membrane pass occupies residues 1028-1048 (IVYLPWFAIAIPFLLVIFVLI). Over 1049 to 1117 (ADHYQSSGRE…GYLVVVLQRW (69 aa)) the chain is Cytoplasmic. The helical transmembrane segment at 1118–1138 (VGIFLDMVAIAFALIITLLCV) threads the bilayer. Residues 1139–1141 (TRA) lie on the Extracellular side of the membrane. Residues 1142 to 1162 (FPISAASVGVLLTYVLQLPGL) form a helical membrane-spanning segment. The Cytoplasmic portion of the chain corresponds to 1163–1477 (LNTILRAMTQ…IVENDFENRS (315 aa)). The ABC transporter 2 domain occupies 1213–1464 (IIFENVDFAY…EDSIFRSMCS (252 aa)). ATP is bound at residue 1247–1254 (GRTGAGKS).

This sequence belongs to the ABC transporter superfamily. ABCC family. Conjugate transporter (TC 3.A.1.208) subfamily.

Its subcellular location is the cell membrane. It catalyses the reaction a 1,2-diacyl-sn-glycero-3-phosphoethanolamine(in) + ATP + H2O = a 1,2-diacyl-sn-glycero-3-phosphoethanolamine(out) + ADP + phosphate + H(+). It carries out the reaction Cd(2+)(in) + ATP + H2O = Cd(2+)(out) + ADP + phosphate + H(+). The catalysed reaction is an S-substituted glutathione(in) + ATP + H2O = an S-substituted glutathione(out) + ADP + phosphate + H(+). In terms of biological role, functions as a pleiotropic drug pump at the plasma membrane to clear toxic substances from the cytosol. Organic anion transporter involved in the detoxification of a wide range of toxic environmental organic anions that contain carboxyl groups. Required for tolerance to reveromycin A, tautomycin and leptomycin B. Required for oligomycin resistance. Required for rhodamine B resistance. Mediates the ATP-dependent efflux of rhodamine B. Involved in cadmium detoxification. Displays an energy-dependent efflux of cadmium and glutathione, suggesting that YOR1 transports both compounds as a bis-glutathionato-cadmium Cd-(GS)(2) complex. Confers resistance to rhodamine 6G and to doxorubicin. This Saccharomyces cerevisiae (strain ATCC 204508 / S288c) (Baker's yeast) protein is Oligomycin resistance ATP-dependent permease YOR1.